The chain runs to 495 residues: Cytochrome P450 2E1 (495 aa).

298–303 (FAGTET) contacts substrate. Cys-437 is a binding site for heme.

The protein belongs to the cytochrome P450 family. Interacts with chaperones HSP70 and HSP90; this interaction is required for initial targeting to mitochondria. It depends on heme as a cofactor.

The protein localises to the endoplasmic reticulum membrane. The protein resides in the microsome membrane. It localises to the mitochondrion inner membrane. The catalysed reaction is an organic molecule + reduced [NADPH--hemoprotein reductase] + O2 = an alcohol + oxidized [NADPH--hemoprotein reductase] + H2O + H(+). The enzyme catalyses (5Z,8Z,11Z)-eicosatrienoate + reduced [NADPH--hemoprotein reductase] + O2 = 19-hydroxy-(5Z,8Z,11Z)-eicosatrienoate + oxidized [NADPH--hemoprotein reductase] + H2O + H(+). It carries out the reaction (5Z,8Z,11Z,14Z,17Z)-eicosapentaenoate + reduced [NADPH--hemoprotein reductase] + O2 = 19-hydroxy-(5Z,8Z,11Z,14Z,17Z)-eicosapentaenoate + oxidized [NADPH--hemoprotein reductase] + H2O + H(+). It catalyses the reaction (4Z,7Z,10Z,13Z,16Z,19Z)-docosahexaenoate + reduced [NADPH--hemoprotein reductase] + O2 = 21-hydroxy-(4Z,7Z,10Z,13Z,16Z,19Z)-docosahexaenoate + oxidized [NADPH--hemoprotein reductase] + H2O + H(+). The catalysed reaction is dodecanoate + reduced [NADPH--hemoprotein reductase] + O2 = 11-hydroxydodecanoate + oxidized [NADPH--hemoprotein reductase] + H2O + H(+). The enzyme catalyses tetradecanoate + reduced [NADPH--hemoprotein reductase] + O2 = 13-hydroxytetradecanoate + oxidized [NADPH--hemoprotein reductase] + H2O + H(+). It carries out the reaction 4-nitrophenol + NADPH + O2 + H(+) = 4-nitrocatechol + NADP(+) + H2O. It functions in the pathway lipid metabolism; fatty acid metabolism. The omega-1 hydroxylase activity is stimulated by cytochrome b5. Its function is as follows. A cytochrome P450 monooxygenase involved in the metabolism of fatty acids. Mechanistically, uses molecular oxygen inserting one oxygen atom into a substrate, and reducing the second into a water molecule, with two electrons provided by NADPH via cytochrome P450 reductase (NADPH--hemoprotein reductase). Catalyzes the hydroxylation of carbon-hydrogen bonds. Hydroxylates fatty acids specifically at the omega-1 position displaying the highest catalytic activity for saturated fatty acids. May be involved in the oxidative metabolism of xenobiotics. This Sus scrofa (Pig) protein is Cytochrome P450 2E1 (CYP2E1).